Here is a 182-residue protein sequence, read N- to C-terminus: uncharacterized protein (182 aa).

2 disordered regions span residues 17–53 (AVSQ…QGSK) and 128–159 (DSLG…PKRS). Positions 42–53 (PQPQCPSAQGSK) are enriched in polar residues. Low complexity predominate over residues 129-138 (SLGSSASSSS).

This is an uncharacterized protein from Homo sapiens (Human).